We begin with the raw amino-acid sequence, 55 residues long: A-type ATP synthase subunit G (55 aa).

As to quaternary structure, has multiple subunits, A(3), B(3), C, D, E, F, G, I and K(x); there may be a few other subunits as well.

Its subcellular location is the cell membrane. In terms of biological role, component of the A-type ATP synthase that produces ATP from ADP in the presence of a proton gradient across the membrane. The chain is A-type ATP synthase subunit G (atpG) from Methanosarcina mazei (strain ATCC BAA-159 / DSM 3647 / Goe1 / Go1 / JCM 11833 / OCM 88) (Methanosarcina frisia).